A 57-amino-acid polypeptide reads, in one-letter code: Large ribosomal subunit protein bL32 (57 aa).

The protein belongs to the bacterial ribosomal protein bL32 family.

This chain is Large ribosomal subunit protein bL32, found in Staphylococcus epidermidis (strain ATCC 35984 / DSM 28319 / BCRC 17069 / CCUG 31568 / BM 3577 / RP62A).